The chain runs to 504 residues: Anaerobic nitric oxide reductase transcription regulator NorR (504 aa).

At Asp57 the chain carries 4-aspartylphosphate. In terms of domain architecture, Sigma-54 factor interaction spans 187–416 (MIGLSPGMTQ…LEHAIHRAVV (230 aa)). ATP contacts are provided by residues 215–222 (GETGTGKE) and 278–287 (ADNGTLFLDE). The H-T-H motif DNA-binding region spans 479 to 498 (WAACARMLETDVANLHRLAK).

It participates in nitrogen metabolism; nitric oxide reduction. Its function is as follows. Required for the expression of anaerobic nitric oxide (NO) reductase, acts as a transcriptional activator for at least the norVW operon. Activation also requires sigma-54. The protein is Anaerobic nitric oxide reductase transcription regulator NorR of Escherichia coli O6:H1 (strain CFT073 / ATCC 700928 / UPEC).